The chain runs to 560 residues: Protein DETOXIFICATION 45, chloroplastic (560 aa).

The N-terminal 75 residues, 1-75, are a transit peptide targeting the chloroplast; the sequence is MESSRVVVGG…QTNPDCGVVK (75 aa). 12 consecutive transmembrane segments (helical) span residues 109 to 129, 147 to 167, 209 to 229, 250 to 270, 280 to 300, 308 to 328, 353 to 373, 389 to 411, 426 to 446, 466 to 486, 495 to 515, and 523 to 543; these read LVMLSLPAIAGQAIDPLTLLM, VSMAIFNTISKLFNIPLLSVA, ALVLAIGIGIFEALALSLASG, FLVLRALGAPAYVVSLALQGI, PVYCLGIGNFLAVFLFPLFIY, GAAISSVISQYTVAILMLILL, FVLGRTLSVLVTMTVATSMAA, VWLAVSLLTDALASSGQALIASS, FVLKIGVVTGIALAIVLGMSF, GVLFVAATQPITALAFIFDGL, YAACSMMVVGGISSAFMLYAP, and VWVGLSMFMGLRMVAGFSRLM.

The protein belongs to the multi antimicrobial extrusion (MATE) (TC 2.A.66.1) family. As to expression, ubiquitous.

The protein resides in the plastid. The protein localises to the chloroplast membrane. This chain is Protein DETOXIFICATION 45, chloroplastic, found in Arabidopsis thaliana (Mouse-ear cress).